Consider the following 591-residue polypeptide: Aspartate--tRNA ligase (591 aa).

Residue Glu171 participates in L-aspartate binding. The tract at residues 195–198 (QLFK) is aspartate. L-aspartate is bound at residue Arg217. ATP-binding positions include 217-219 (RDE) and Gln226. His448 contributes to the L-aspartate binding site. Glu482 is a binding site for ATP. Arg489 is an L-aspartate binding site. 534–537 (GLDR) provides a ligand contact to ATP.

It belongs to the class-II aminoacyl-tRNA synthetase family. Type 1 subfamily. Homodimer.

The protein resides in the cytoplasm. It catalyses the reaction tRNA(Asp) + L-aspartate + ATP = L-aspartyl-tRNA(Asp) + AMP + diphosphate. Catalyzes the attachment of L-aspartate to tRNA(Asp) in a two-step reaction: L-aspartate is first activated by ATP to form Asp-AMP and then transferred to the acceptor end of tRNA(Asp). The chain is Aspartate--tRNA ligase from Vibrio cholerae serotype O1 (strain ATCC 39541 / Classical Ogawa 395 / O395).